The primary structure comprises 493 residues: Vacuolar-processing enzyme (493 aa).

Positions 1–34 are cleaved as a signal peptide; it reads MAVHRSLLNKPTWCRVAFWWWMLVMVMRIQGTNG. The propeptide occupies 35–53; it reads KEQDSVIKLPTQEVDAESD. Residue H176 is part of the active site. The active-site Nucleophile is C218. A disulfide bridge links C251 with C265. The N-linked (GlcNAc...) asparagine glycan is linked to N318. Cystine bridges form between C429/C459 and C441/C476.

It belongs to the peptidase C13 family.

Its function is as follows. Asparagine-specific endopeptidase involved in the processing of vacuolar seed protein precursors into the mature forms. This Phaseolus vulgaris (Kidney bean) protein is Vacuolar-processing enzyme.